Reading from the N-terminus, the 926-residue chain is Ubiquitin carboxyl-terminal hydrolase 4 (926 aa).

The region spanning 205 to 328 is the Rhodanese domain; it reads SQMEILLIDI…WLKSNYGRQV (124 aa). Ser443 carries the phosphoserine modification. The USP domain maps to 562-923; it reads VGLENLGNSC…NAYVLFYHRV (362 aa). The Nucleophile role is filled by Cys571. His880 acts as the Proton acceptor in catalysis.

It belongs to the peptidase C19 family. As to quaternary structure, interacts with BRO1, RFU1 and VPS32. Associates with the 26S proteasome.

The protein resides in the cytoplasm. Its subcellular location is the late endosome membrane. The enzyme catalyses Thiol-dependent hydrolysis of ester, thioester, amide, peptide and isopeptide bonds formed by the C-terminal Gly of ubiquitin (a 76-residue protein attached to proteins as an intracellular targeting signal).. RFU1 is an inhibitor of deubiquitination activity. In terms of biological role, ubiquitin thioesterase that acts at the late endosome/prevacuolar compartment to recover ubiquitin from ubiquitinated membrane proteins en route to the vacuole. Also removes ubiquitin from soluble proteins targeted to proteasomes. Is essential to maintain a normal level of free ubiquitin. Involved in the ammonium-induced down-regulation of the GAP1 permease and the UME3 destruction in response to oxidative stress. Has a role in the RAD9 checkpoint response to TOP1 poisons. Required for promoting coordination of DNA replication and avoids DNA overreplication. This Saccharomyces cerevisiae (strain ATCC 204508 / S288c) (Baker's yeast) protein is Ubiquitin carboxyl-terminal hydrolase 4 (DOA4).